The following is a 333-amino-acid chain: Delta(9)-fatty-acid desaturase fat-5 (333 aa).

A run of 4 helical transmembrane segments spans residues 42-62 (NVAL…QLVF), 66-86 (WATV…VTGG), 187-207 (LPLV…VLWG), and 210-230 (AFIA…HATW).

This sequence belongs to the fatty acid desaturase type 1 family. Expressed in the intestine in adult worms and in all four larval stages. Additional expression in the pharynx and tail cells after hatching and throughout the lifespan.

Its subcellular location is the membrane. It catalyses the reaction hexadecanoyl-CoA + 2 Fe(II)-[cytochrome b5] + O2 + 2 H(+) = (9Z)-hexadecenoyl-CoA + 2 Fe(III)-[cytochrome b5] + 2 H2O. The catalysed reaction is tetradecanoyl-CoA + 2 Fe(II)-[cytochrome b5] + O2 + 2 H(+) = (9Z)-tetradecenoyl-CoA + 2 Fe(III)-[cytochrome b5] + 2 H2O. The enzyme catalyses heptadecanoyl-CoA + 2 Fe(II)-[cytochrome b5] + O2 + 2 H(+) = (9Z)-heptadecenoyl-CoA + 2 Fe(III)-[cytochrome b5] + 2 H2O. It carries out the reaction pentadecanoyl-CoA + 2 Fe(II)-[cytochrome b5] + O2 + 2 H(+) = (9Z)-pentadecenoyl-CoA + 2 Fe(III)-[cytochrome b5] + 2 H2O. It participates in lipid metabolism; monounsaturated fatty acid biosynthesis. Its function is as follows. Delta(9)-fatty acid desaturase that acts preferentially on palmitoyl-CoA (hexadecanoyl-CoA) producing the monounsaturated palmitoleoyl-CoA ((9Z)-hexadecenoyl-CoA), which can be elongated to (11Z)-octadecenoyl-CoA (the most abundant monounsaturated fatty acid in Caenorhabditis elegans phospholipids and triacylglycerols). Also acts on pentadecanoyl-CoA, heptadecanoyl-CoA and myristoyl-CoA (tetradecanoyl-CoA), the monounsaturated fatty acids (MUFAs) produced are further used as substrates to synthesize polyunsaturated fatty acids (PUFAs) by several other desaturases and elongases. Unlike plants, Caenorhabditis elegans desaturases seem to use fatty acyl-CoAs as substrates. The protein is Delta(9)-fatty-acid desaturase fat-5 (fat-5) of Caenorhabditis elegans.